The chain runs to 265 residues: 3-methyl-2-oxobutanoate hydroxymethyltransferase (265 aa).

The Mg(2+) site is built by Asp-45 and Asp-84. 3-methyl-2-oxobutanoate-binding positions include 45-46 (DS), Asp-84, and Lys-112. Residue Glu-114 participates in Mg(2+) binding. The active-site Proton acceptor is the Glu-181.

This sequence belongs to the PanB family. Homodecamer; pentamer of dimers. Mg(2+) is required as a cofactor.

The protein localises to the cytoplasm. The catalysed reaction is 3-methyl-2-oxobutanoate + (6R)-5,10-methylene-5,6,7,8-tetrahydrofolate + H2O = 2-dehydropantoate + (6S)-5,6,7,8-tetrahydrofolate. Its pathway is cofactor biosynthesis; (R)-pantothenate biosynthesis; (R)-pantoate from 3-methyl-2-oxobutanoate: step 1/2. Its function is as follows. Catalyzes the reversible reaction in which hydroxymethyl group from 5,10-methylenetetrahydrofolate is transferred onto alpha-ketoisovalerate to form ketopantoate. The sequence is that of 3-methyl-2-oxobutanoate hydroxymethyltransferase from Wigglesworthia glossinidia brevipalpis.